A 771-amino-acid polypeptide reads, in one-letter code: Heat shock transcription factor (771 aa).

Positions 1–70 are disordered; that stretch reads MTTNLYAIAG…GIGISKPGLS (70 aa). 2 stretches are compositionally biased toward low complexity: residues 11-23 and 31-42; these read PSKP…TPSP and LKSLTSLPTNPL. The segment covering 43–62 has biased composition (polar residues); the sequence is NPQGTSTSNALTNQSSSTGI. Residues 78 to 168 mediate DNA binding; the sequence is MKVPAFLNKL…PIELWEFANP (91 aa). The tract at residues 183–266 is disordered; the sequence is RKNNRLSNSG…PPSHTSAGPL (84 aa). 2 stretches are compositionally biased toward low complexity: residues 189–199 and 212–233; these read SNSGVGSSSSL and SASA…ISQG. A compositionally biased stretch (polar residues) spans 238–262; sequence NHSTSGKYLITDGTTPGSAPPSHTS. The interval 280-333 is involved in trimerization; sequence GIAAIRQTQASIATDLRKLQASNEALWRQAYETQEKQRKHEETIDLIVSFLERL. Composition is skewed to basic and acidic residues over residues 350-372 and 399-415; these read RGVG…ARFA and TGEH…DRLV. 3 disordered regions span residues 350–513, 590–634, and 708–771; these read RGVG…SSNA, QALT…GSGT, and SGVG…SGLK. The segment covering 418–448 has biased composition (polar residues); sequence GSNSEYSIPSVKRTSSSSHPLSLGQLGSSRF. 2 stretches are compositionally biased toward low complexity: residues 497–511 and 599–620; these read LSPL…PSSS and HNPS…SASA.

The protein belongs to the HSF family. As to quaternary structure, homotrimer. Homotrimerization increases the affinity of HSF1 to DNA. Interacts with transcriptional coregulator SSA1 on chromatin. Phosphorylated at high temperature.

The protein localises to the nucleus. DNA-binding transcription factor that specifically binds heat shock promoter elements (HSE) and activates transcription. Promotes thermotolerance by transiently regulating a subset of genes. Induces expression of STI, SSA1, SSA2, HSP78 and KAR2 during the heat response. The sequence is that of Heat shock transcription factor from Cryptococcus neoformans var. grubii serotype A (strain H99 / ATCC 208821 / CBS 10515 / FGSC 9487) (Filobasidiella neoformans var. grubii).